A 951-amino-acid polypeptide reads, in one-letter code: Zinc fingers and homeoboxes protein 3 (951 aa).

The disordered stretch occupies residues 1-66; the sequence is MASKRKSTTP…SSTDGSALAN (66 aa). The segment covering 42–58 has biased composition (low complexity); sequence PSEAPEASSEAAPNPSS. 2 consecutive C2H2-type zinc fingers follow at residues 77 to 100 and 109 to 132; these read YSCK…TSEH and FVCT…AKCH. The tract at residues 198 to 249 is disordered; it reads KENAPTQPGGEALPKPLAGETEGKEGDHTFINGATPVSQASANSTKPPHTAN. The segment covering 232–244 has biased composition (polar residues); that stretch reads TPVSQASANSTKP. The interval 237–481 is required for homodimerization and interaction with NFYA; sequence ASANSTKPPH…LLTACPSITS (245 aa). Positions 297-495 are required for repressor activity; the sequence is LSSIPTYNAA…DANIYKNKKS (199 aa). 2 consecutive DNA-binding regions (homeobox) follow at residues 298 to 357 and 487 to 546; these read SSIP…GISW and ANIY…RNLK. The required for nuclear localization stretch occupies residues 490-548; sequence YKNKKSHEQLSALKGSFCRNQFPGQSEVEHLTKVTGLSTREVRKWFSDRRYHCRNLKGT. Ser597 carries the phosphoserine modification. Positions 605-664 form a DNA-binding region, homeobox 3; sequence TPTKYKERAPEQLRVLESSFAQNPLPPEEELDRLRSETKMTRREIDGWFSERRKRVNAEE. Disordered stretches follow at residues 621 to 642 and 661 to 702; these read ESSF…RSET and NAEE…NGSS. The segment covering 661–674 has biased composition (basic and acidic residues); the sequence is NAEETKKADGHAPQ. The span at 675–690 shows a compositional bias: acidic residues; that stretch reads EEAEGAEEEGRDEELA. A phosphoserine mark is found at Ser701 and Ser716. 2 DNA-binding regions (homeobox) span residues 759–818 and 830–889; these read PSRV…KNGQ and FPPG…TRAV. Residues 885 to 951 form a disordered region; sequence ETRAVADTSS…PQSGRQLETD (67 aa). Phosphoserine occurs at positions 922 and 941. Polar residues predominate over residues 937–951; the sequence is FDTSSPQSGRQLETD.

The protein belongs to the ZHX family. Homodimer (via homeobox domain 1). Heterodimer with ZHX1 (via homeobox domain 1). Heterodimer with ZHX2 (via homeobox domain 1). Heterodimerization with ZHX1 is a prerequisite for repressor activity. Interacts with NFYA. In terms of tissue distribution, widely expressed.

It is found in the cytoplasm. The protein resides in the nucleus. Functionally, acts as a transcriptional repressor. Involved in the early stages of mesenchymal stem cell (MSC) osteogenic differentiation. Is a regulator of podocyte gene expression during primary glomerula disease. Binds to promoter DNA. This is Zinc fingers and homeoboxes protein 3 (Zhx3) from Rattus norvegicus (Rat).